The chain runs to 691 residues: Elongation factor G (691 aa).

A tr-type G domain is found at Glu-8–Val-282. Residues Ala-17–Thr-24, Asp-81–His-85, and Asn-135–Asp-138 each bind GTP.

The protein belongs to the TRAFAC class translation factor GTPase superfamily. Classic translation factor GTPase family. EF-G/EF-2 subfamily.

The protein localises to the cytoplasm. Catalyzes the GTP-dependent ribosomal translocation step during translation elongation. During this step, the ribosome changes from the pre-translocational (PRE) to the post-translocational (POST) state as the newly formed A-site-bound peptidyl-tRNA and P-site-bound deacylated tRNA move to the P and E sites, respectively. Catalyzes the coordinated movement of the two tRNA molecules, the mRNA and conformational changes in the ribosome. This Prochlorococcus marinus (strain MIT 9515) protein is Elongation factor G.